The primary structure comprises 580 residues: Arrestin domain-containing protein A (580 aa).

Asparagine 27, asparagine 33, and asparagine 60 each carry an N-linked (GlcNAc...) asparagine glycan. A disordered region spans residues 31 to 54; the sequence is NVNTTSSHHHHHSNSGNAEVSFNG. 2 disordered regions span residues 67 to 86 and 95 to 114; these read ETHS…EISI and MTMS…HKES. The helical transmembrane segment at 118 to 138 threads the bilayer; that stretch reads NLSLGGIVGAVVGAVTGGVMI. N-linked (GlcNAc...) asparagine glycosylation is found at asparagine 149, asparagine 341, and asparagine 342. The FYVE-type zinc finger occupies 468–528; sequence DEHATACRKC…VCEECYPIAT (61 aa). Zn(2+)-binding residues include cysteine 474, cysteine 477, cysteine 490, cysteine 493, cysteine 498, cysteine 501, cysteine 520, and cysteine 523.

Belongs to the arrestin family.

The protein resides in the membrane. This Dictyostelium discoideum (Social amoeba) protein is Arrestin domain-containing protein A (adcA).